The sequence spans 361 residues: Peptide chain release factor 1 (361 aa).

An N5-methylglutamine modification is found at Q235.

It belongs to the prokaryotic/mitochondrial release factor family. Methylated by PrmC. Methylation increases the termination efficiency of RF1.

Its subcellular location is the cytoplasm. In terms of biological role, peptide chain release factor 1 directs the termination of translation in response to the peptide chain termination codons UAG and UAA. The chain is Peptide chain release factor 1 from Buchnera aphidicola subsp. Acyrthosiphon pisum (strain 5A).